Reading from the N-terminus, the 445-residue chain is Nuclear envelope integral membrane protein 1 (445 aa).

The first 44 residues, Met1–Gly44, serve as a signal peptide directing secretion. The N-linked (GlcNAc...) asparagine glycan is linked to Asn125. 5 helical membrane-spanning segments follow: residues Pro161–Ser181, Phe186–Ile206, Pro216–Phe236, Cys245–Cys265, and Leu289–Ala309. The segment at Phe186–Gln297 is a; required for its colocalization with lamins at the nuclear envelope. The tract at residues Thr336–Glu405 is b; required for interaction with RAN-GTP. Residues Thr336–Thr445 are required for nuclear localization. A phosphoserine mark is found at Ser368, Ser424, and Ser425. Positions Glu418–Ser430 are enriched in acidic residues. Positions Glu418–Thr445 are disordered.

The protein belongs to the NEMP family. As to quaternary structure, homooligomer. Interacts with RAN-GTP. Interacts with EMD. Phosphorylation may regulate its interaction with RAN-GTP.

The protein resides in the nucleus inner membrane. It is found in the nucleus envelope. Together with EMD, contributes to nuclear envelope stiffness in germ cells. Required for female fertility. Essential for normal erythropoiesis. Required for efficient nuclear envelope opening and enucleation during the late stages of erythroblast maturation. In Bos taurus (Bovine), this protein is Nuclear envelope integral membrane protein 1 (NEMP1).